Here is a 387-residue protein sequence, read N- to C-terminus: F420-dependent formate dehydrogenase 1 subunit beta (387 aa).

2 consecutive 4Fe-4S ferredoxin-type domains span residues 275-298 and 326-355; these read TIEE…VCPV and VRMS…ARIF. Residues C286, C289, C292, C296, C335, C338, C341, and C345 each contribute to the [4Fe-4S] cluster site. Residues 366-387 form a disordered region; sequence LGYRPGVDDEAPPALGGSCPTQ.

Belongs to the FrhB family. As to quaternary structure, dimer of an alpha (FdhA1) and a beta (FdhB1) subunit. Requires [4Fe-4S] cluster as cofactor. The cofactor is FAD. Zn(2+) serves as cofactor.

It carries out the reaction oxidized coenzyme F420-(gamma-L-Glu)(n) + formate + 2 H(+) = reduced coenzyme F420-(gamma-L-Glu)(n) + CO2. In terms of biological role, catalyzes the oxidation of formate to carbon dioxide, with coenzyme F420 as the electron acceptor. In vitro can also use methyl viologen as electron acceptor. This is F420-dependent formate dehydrogenase 1 subunit beta from Methanococcus maripaludis (strain DSM 14266 / JCM 13030 / NBRC 101832 / S2 / LL).